Reading from the N-terminus, the 387-residue chain is 4-hydroxy-3-methylbut-2-en-1-yl diphosphate synthase (flavodoxin) (387 aa).

Positions 280, 283, 315, and 322 each coordinate [4Fe-4S] cluster.

It belongs to the IspG family. [4Fe-4S] cluster is required as a cofactor.

The catalysed reaction is (2E)-4-hydroxy-3-methylbut-2-enyl diphosphate + oxidized [flavodoxin] + H2O + 2 H(+) = 2-C-methyl-D-erythritol 2,4-cyclic diphosphate + reduced [flavodoxin]. Its pathway is isoprenoid biosynthesis; isopentenyl diphosphate biosynthesis via DXP pathway; isopentenyl diphosphate from 1-deoxy-D-xylulose 5-phosphate: step 5/6. Converts 2C-methyl-D-erythritol 2,4-cyclodiphosphate (ME-2,4cPP) into 1-hydroxy-2-methyl-2-(E)-butenyl 4-diphosphate. This is 4-hydroxy-3-methylbut-2-en-1-yl diphosphate synthase (flavodoxin) from Mycobacterium bovis (strain BCG / Pasteur 1173P2).